The primary structure comprises 249 residues: Electron transfer flavoprotein subunit beta (249 aa).

Belongs to the ETF beta-subunit/FixA family. Heterodimer of an alpha and a beta subunit. FAD is required as a cofactor. Requires AMP as cofactor.

The electron transfer flavoprotein serves as a specific electron acceptor for other dehydrogenases. It transfers the electrons to the main respiratory chain via ETF-ubiquinone oxidoreductase (ETF dehydrogenase). The sequence is that of Electron transfer flavoprotein subunit beta (etfB) from Bradyrhizobium diazoefficiens (strain JCM 10833 / BCRC 13528 / IAM 13628 / NBRC 14792 / USDA 110).